A 291-amino-acid polypeptide reads, in one-letter code: MITLAVDIGGTKISAALISDDGSFLLKKQISTPHERCPDEMTGALRLLVSEMKGTAERFAVASTGIINNGVLTALNPDNLGGLKEYPLKNIMEDITGLNGSVINDAQAAAWAEYTVLPKEICDMVFITVSTGVGGGIVVNRKLLTGVSGLAGHVGHILSGVTDTECGCGRRGCVEAVSSGRAIMGAAKNKLAGYSTKYIFELARQGYKEAEFLTERSASTIAELIVSLKLLLDCQVVVVGGSVGLADGYVQKVSKHLSIYSEICNVMLFPAYFRSDSGLIGATLWDRDCIT.

Residues A5–K12 and G132–V139 contribute to the ATP site. Zn(2+) is bound by residues H156, C166, C168, and C173.

Belongs to the ROK (NagC/XylR) family. NanK subfamily. Homodimer.

The enzyme catalyses an N-acyl-D-mannosamine + ATP = an N-acyl-D-mannosamine 6-phosphate + ADP + H(+). Its pathway is amino-sugar metabolism; N-acetylneuraminate degradation; D-fructose 6-phosphate from N-acetylneuraminate: step 2/5. Catalyzes the phosphorylation of N-acetylmannosamine (ManNAc) to ManNAc-6-P. This Escherichia coli O6:H1 (strain CFT073 / ATCC 700928 / UPEC) protein is N-acetylmannosamine kinase (nanK2).